Consider the following 73-residue polypeptide: Translation initiation factor IF-1 (73 aa).

Positions 1–73 constitute an S1-like domain; that stretch reads MSEKEAGIEV…TRGRITYRDK (73 aa).

This sequence belongs to the IF-1 family. As to quaternary structure, component of the 30S ribosomal translation pre-initiation complex which assembles on the 30S ribosome in the order IF-2 and IF-3, IF-1 and N-formylmethionyl-tRNA(fMet); mRNA recruitment can occur at any time during PIC assembly.

The protein localises to the cytoplasm. Functionally, one of the essential components for the initiation of protein synthesis. Stabilizes the binding of IF-2 and IF-3 on the 30S subunit to which N-formylmethionyl-tRNA(fMet) subsequently binds. Helps modulate mRNA selection, yielding the 30S pre-initiation complex (PIC). Upon addition of the 50S ribosomal subunit IF-1, IF-2 and IF-3 are released leaving the mature 70S translation initiation complex. This Anaeromyxobacter sp. (strain Fw109-5) protein is Translation initiation factor IF-1.